Consider the following 284-residue polypeptide: Pantothenate synthetase (284 aa).

ATP is bound at residue 32–39 (MGALHEGH). His-39 serves as the catalytic Proton donor. Gln-63 serves as a coordination point for (R)-pantoate. Gln-63 is a binding site for beta-alanine. Residue 149-152 (GEKD) participates in ATP binding. Gln-155 lines the (R)-pantoate pocket. ATP contacts are provided by residues Val-178 and 186–189 (LSSR).

It belongs to the pantothenate synthetase family. As to quaternary structure, homodimer.

It is found in the cytoplasm. The catalysed reaction is (R)-pantoate + beta-alanine + ATP = (R)-pantothenate + AMP + diphosphate + H(+). Its pathway is cofactor biosynthesis; (R)-pantothenate biosynthesis; (R)-pantothenate from (R)-pantoate and beta-alanine: step 1/1. Catalyzes the condensation of pantoate with beta-alanine in an ATP-dependent reaction via a pantoyl-adenylate intermediate. This chain is Pantothenate synthetase, found in Chelativorans sp. (strain BNC1).